The primary structure comprises 350 residues: Phenylalanine--tRNA ligase alpha subunit (350 aa).

Position 260 (glutamate 260) interacts with Mg(2+).

This sequence belongs to the class-II aminoacyl-tRNA synthetase family. Phe-tRNA synthetase alpha subunit type 1 subfamily. Tetramer of two alpha and two beta subunits. Mg(2+) serves as cofactor.

Its subcellular location is the cytoplasm. The catalysed reaction is tRNA(Phe) + L-phenylalanine + ATP = L-phenylalanyl-tRNA(Phe) + AMP + diphosphate + H(+). The protein is Phenylalanine--tRNA ligase alpha subunit of Mesoplasma florum (strain ATCC 33453 / NBRC 100688 / NCTC 11704 / L1) (Acholeplasma florum).